Consider the following 210-residue polypeptide: Somatotropin (210 aa).

The N-terminal stretch at 1–22 (MGQVFLLMPVLLVSCFLSQGAA) is a signal peptide. His38 provides a ligand contact to Zn(2+). Cys71 and Cys183 form a disulfide bridge. Glu192 lines the Zn(2+) pocket. Cys200 and Cys208 are oxidised to a cystine.

It belongs to the somatotropin/prolactin family.

Its subcellular location is the secreted. Functionally, growth hormone plays an important role in growth control and is involved in the regulation of several anabolic processes. Implicated as an osmoregulatory substance important for seawater adaptation. The chain is Somatotropin (gh) from Oncorhynchus tshawytscha (Chinook salmon).